A 72-amino-acid chain; its full sequence is Translation initiation factor IF-1 (72 aa).

Residues 1–72 enclose the S1-like domain; the sequence is MSKDDVIEMQ…TRGRITWRAK (72 aa).

This sequence belongs to the IF-1 family. As to quaternary structure, component of the 30S ribosomal translation pre-initiation complex which assembles on the 30S ribosome in the order IF-2 and IF-3, IF-1 and N-formylmethionyl-tRNA(fMet); mRNA recruitment can occur at any time during PIC assembly.

Its subcellular location is the cytoplasm. In terms of biological role, one of the essential components for the initiation of protein synthesis. Stabilizes the binding of IF-2 and IF-3 on the 30S subunit to which N-formylmethionyl-tRNA(fMet) subsequently binds. Helps modulate mRNA selection, yielding the 30S pre-initiation complex (PIC). Upon addition of the 50S ribosomal subunit IF-1, IF-2 and IF-3 are released leaving the mature 70S translation initiation complex. The protein is Translation initiation factor IF-1 of Clostridium botulinum (strain ATCC 19397 / Type A).